We begin with the raw amino-acid sequence, 383 residues long: Gap junction alpha-1 protein (383 aa).

Topologically, residues 2 to 23 are cytoplasmic; it reads GDWSALGKLLDKVQAYSTAGGK. The residue at position 5 (Ser-5) is a Phosphoserine. A helical membrane pass occupies residues 24 to 44; that stretch reads VWLSVLFIFRILLLGTAVESA. At 45 to 76 the chain is on the extracellular side; sequence WGDEQSAFRCNTQQPGCENVCYDKSFPISHVR. 2 disulfides stabilise this stretch: Cys-54–Cys-193 and Cys-188–Cys-199. The helical transmembrane segment at 77 to 97 threads the bilayer; sequence FWVLQIIFVSVPTLLYLAHVF. Over 98-156 the chain is Cytoplasmic; that stretch reads YVMRKEEKLNKKEEELKVVAQTDGANVDMHLKQIEIKKFKYGIEEHGKVKMRGGLLRTY. Residue Lys-145 forms a Glycyl lysine isopeptide (Lys-Gly) (interchain with G-Cter in SUMO) linkage. A helical membrane pass occupies residues 157 to 177; the sequence is IISILFKSVFEVAFLLIQWYI. Topologically, residues 178 to 208 are extracellular; it reads YGFSLSAVYTCKRDPCPHQVDCFLSRPTEKT. A helical membrane pass occupies residues 209 to 229; the sequence is IFIIFMLVVSLVSLALNIIEL. Over 230-383 the chain is Cytoplasmic; that stretch reads FYVFFKGVKD…SRPRPDDLEI (154 aa). Lys-238 is covalently cross-linked (Glycyl lysine isopeptide (Lys-Gly) (interchain with G-Cter in SUMO)). The interaction with NOV stretch occupies residues 245–383; the sequence is SDPYHTTTGP…SRPRPDDLEI (139 aa). Phosphotyrosine is present on Tyr-248. 3 positions are modified to phosphoserine: Ser-256, Ser-258, and Ser-263. Residues 265 to 383 form an interaction with UBQLN4 region; that stretch reads KYAYFNGCSS…SRPRPDDLEI (119 aa). Position 272 is an S-nitrosocysteine (Cys-272). Thr-276 bears the Phosphothreonine mark. Residues Ser-307 and Ser-315 each carry the phosphoserine modification. The segment covering 318 to 333 has biased composition (polar residues); it reads QNRMGQAGSTISNSHA. The disordered stretch occupies residues 318–383; that stretch reads QNRMGQAGST…SRPRPDDLEI (66 aa). Ser-326 carries the phosphoserine; by CK1 modification. Thr-327 bears the Phosphothreonine mark. Phosphoserine; by CK1 occurs at positions 329 and 331. Basic and acidic residues predominate over residues 339-352; sequence PDDHQNSKKLDAGH. Residues Ser-345 and Ser-366 each carry the phosphoserine modification. The span at 363–375 shows a compositional bias: low complexity; sequence RPSSRASSRASSR. Residue Ser-369 is modified to Phosphoserine; by PKC/PRKCG and PKC/PRKCD. Phosphoserine occurs at positions 370 and 374.

The protein belongs to the connexin family. Alpha-type (group II) subfamily. In terms of assembly, a connexon is composed of a hexamer of connexins. Interacts with SGSM3. Interacts with RIC1/CIP150. Interacts with CNST and CSNK1D. Interacts (via C-terminus) with TJP1. Interacts (via C-terminus) with SRC (via SH3 domain). Interacts (not ubiquitinated) with UBQLN4 (via UBA domain). Interacts with NOV. Interacts with TMEM65. Interacts with ANK3/ANKG and PKP2. Phosphorylation at Ser-326, Ser-329 and Ser-331 by CK1 modulates gap junction assembly. Phosphorylated at Ser-369 by PRKCG; phosphorylation induces disassembly of gap junction plaques and inhibition of gap junction activity. Phosphorylation at Ser-369 by PRKCD triggers its internalization into small vesicles leading to proteasome-mediated degradation. In terms of processing, sumoylated with SUMO1, SUMO2 and SUMO3, which may regulate the level of functional Cx43 gap junctions at the plasma membrane. May be desumoylated by SENP1 or SENP2. Post-translationally, acetylated in the developing cortex; leading to delocalization from the cell membrane.

It is found in the cell membrane. It localises to the cell junction. The protein localises to the gap junction. Its subcellular location is the endoplasmic reticulum. Gap junction protein that acts as a regulator of bladder capacity. A gap junction consists of a cluster of closely packed pairs of transmembrane channels, the connexons, through which materials of low MW diffuse from one cell to a neighboring cell. May play a critical role in the physiology of hearing by participating in the recycling of potassium to the cochlear endolymph. Negative regulator of bladder functional capacity: acts by enhancing intercellular electrical and chemical transmission, thus sensitizing bladder muscles to cholinergic neural stimuli and causing them to contract. May play a role in cell growth inhibition through the regulation of NOV expression and localization. Plays an essential role in gap junction communication in the ventricles. This Bos taurus (Bovine) protein is Gap junction alpha-1 protein (GJA1).